Consider the following 207-residue polypeptide: Suppressor of IKBKE 1 (207 aa).

2 coiled-coil regions span residues 4-32 and 154-193; these read TIDK…LIDQ and DAIQ…SLHS. Residues 186 to 207 form a disordered region; the sequence is TSKESLHSSKRESEWNFSEKTQ. Basic and acidic residues predominate over residues 189–199; the sequence is ESLHSSKRESE.

It belongs to the SIKE family. Interacts with IKBKE and TBK1 via its coiled coil region. Interaction with TBK1 is disrupted upon viral infection or TLR3 stimulation. Interacts with CDC42BPB. Associates with the STRIPAK core complex composed of PP2A catalytic and scaffolding subunits, the striatins (PP2A regulatory subunits), the striatin-associated proteins MOB4, STRIP1 and STRIP2, PDCD10 and members of the STE20 kinases, such as STK24 and STK26.

In terms of biological role, suppressor of IKK-epsilon. Associates with the striatin-interacting phosphatase and kinase (STRIPAK) core complex, forming the extended (SIKE1:SLMAP)STRIPAK complex. The (SIKE1:SLMAP)STRIPAK complex dephosphorylates STK3 leading to the inhibition of Hippo signaling and the control of cell growth. The polypeptide is Suppressor of IKBKE 1 (sike1) (Xenopus tropicalis (Western clawed frog)).